A 411-amino-acid chain; its full sequence is MSDKNIRCSFCGRTQKEVKKLIAGPGVYICDECVKLAYDIIEEEDSEEIEEENQEFVLPKPHEIKNFLDQYVIGQERAKKILSVAVYNHYKRIFMRSKITEDVEIQKSNVLLIGPTGVGKTLLAETLAKFLKVPFAIADATTLTEAGYVGEDVENILLRLIQNADWDIKRAEKGIVYIDEIDKISRKSENPSITRDVSGEGVQQALLRIVEGTIANVPPQGGRKHPYQEFIQINTKDILFIAGGSFEGIEKIVEKRLDVSNIGFGAQIEPKNRKSLTQILNHIIPEDLIKFGMIPEFVGRFPVVAVLEPLSEEALLKILTEPKNALVKQYKALLSMEGVEINFTDEALKAIVKEAIDKATGARGLRAVMEELMLDLMYELPNLGIKKFTVTPELVYNRNKISQDLLKKLAG.

The ClpX-type ZB domain occupies 1 to 49 (MSDKNIRCSFCGRTQKEVKKLIAGPGVYICDECVKLAYDIIEEEDSEEI). Zn(2+) contacts are provided by C8, C11, C30, and C33. 115 to 122 (PTGVGKTL) provides a ligand contact to ATP.

Belongs to the ClpX chaperone family. Component of the ClpX-ClpP complex. Forms a hexameric ring that, in the presence of ATP, binds to fourteen ClpP subunits assembled into a disk-like structure with a central cavity, resembling the structure of eukaryotic proteasomes.

In terms of biological role, ATP-dependent specificity component of the Clp protease. It directs the protease to specific substrates. Can perform chaperone functions in the absence of ClpP. The sequence is that of ATP-dependent Clp protease ATP-binding subunit ClpX from Dictyoglomus turgidum (strain DSM 6724 / Z-1310).